The following is a 458-amino-acid chain: Carboxypeptidase N catalytic chain (458 aa).

The first 20 residues, 1-20 (MSDLLSVFLHLLLLFKLVAP), serve as a signal peptide directing secretion. Residues 24–338 (RHHRYDDLVR…EALIQFLEQV (315 aa)) form the Peptidase M14 domain. A disulfide bond links cysteine 42 and cysteine 104. Positions 86, 89, and 216 each coordinate Zn(2+). Cysteines 271 and 311 form a disulfide. Residue glutamate 308 is the Proton donor/acceptor of the active site. O-linked (GalNAc...) threonine glycosylation is found at threonine 400, threonine 402, and threonine 409. Positions 423–458 (SPVRRAPSRRHGVRAKVQPQARKKEMEMRQLQRGPA) are disordered.

Belongs to the peptidase M14 family. In terms of assembly, tetramer of two catalytic chains and two glycosylated inactive chains. It depends on Zn(2+) as a cofactor. As to expression, synthesized in the liver and secreted in plasma.

It localises to the secreted. It is found in the extracellular space. The catalysed reaction is Release of a C-terminal basic amino acid, preferentially lysine.. Functionally, protects the body from potent vasoactive and inflammatory peptides containing C-terminal Arg or Lys (such as kinins or anaphylatoxins) which are released into the circulation. The polypeptide is Carboxypeptidase N catalytic chain (CPN1) (Homo sapiens (Human)).